The primary structure comprises 139 residues: Nucleoside diphosphate kinase (139 aa).

ATP contacts are provided by Lys10, Phe58, Arg86, Thr92, Arg103, and Asn113. His116 serves as the catalytic Pros-phosphohistidine intermediate.

Belongs to the NDK family. In terms of assembly, homotetramer. Requires Mg(2+) as cofactor.

Its subcellular location is the cytoplasm. It catalyses the reaction a 2'-deoxyribonucleoside 5'-diphosphate + ATP = a 2'-deoxyribonucleoside 5'-triphosphate + ADP. The enzyme catalyses a ribonucleoside 5'-diphosphate + ATP = a ribonucleoside 5'-triphosphate + ADP. Functionally, major role in the synthesis of nucleoside triphosphates other than ATP. The ATP gamma phosphate is transferred to the NDP beta phosphate via a ping-pong mechanism, using a phosphorylated active-site intermediate. This chain is Nucleoside diphosphate kinase, found in Nitratidesulfovibrio vulgaris (strain DSM 19637 / Miyazaki F) (Desulfovibrio vulgaris).